The following is a 430-amino-acid chain: Asparagine--tRNA ligase (430 aa).

Belongs to the class-II aminoacyl-tRNA synthetase family. In terms of assembly, homodimer.

It is found in the cytoplasm. It catalyses the reaction tRNA(Asn) + L-asparagine + ATP = L-asparaginyl-tRNA(Asn) + AMP + diphosphate + H(+). This chain is Asparagine--tRNA ligase, found in Listeria monocytogenes serotype 4b (strain F2365).